Reading from the N-terminus, the 59-residue chain is Putative zinc finger protein ORF59a (59 aa).

A C2H2-type; degenerate zinc finger spans residues 11–33; sequence YQCLRCGLTFRTKKQLIRHLVNT.

The chain is Putative zinc finger protein ORF59a from Acidianus hospitalis (AFV-1).